Reading from the N-terminus, the 1132-residue chain is Ubiquitin carboxyl-terminal hydrolase 43 (1132 aa).

Residues 1–103 (MDPGVGNALG…GARPPGAQGL (103 aa)) are disordered. A compositionally biased stretch (basic residues) spans 17 to 28 (RPRRRRSLRRLL). Composition is skewed to low complexity over residues 29-44 (NRFL…SGDS) and 63-78 (FACA…GSPG). The 610-residue stretch at 101 to 710 (QGLKNHGNTC…GAYILFYQKR (610 aa)) folds into the USP domain. Cysteine 110 acts as the Nucleophile in catalysis. Histidine 668 functions as the Proton acceptor in the catalytic mechanism. Arginine 746 carries the asymmetric dimethylarginine modification. Disordered regions lie at residues 839-891 (RRRP…TGVP), 935-1008 (TVMP…RGQG), 1024-1044 (RTVR…SDRL), and 1057-1106 (RESP…GEQI). Residues 941–950 (GDEKPARPEG) are compositionally biased toward basic and acidic residues. Low complexity predominate over residues 958–967 (GSSQVGSQSS). The residue at position 970 (serine 970) is a Phosphoserine. Basic and acidic residues predominate over residues 994 to 1006 (AAMEERAPDKDRG).

The protein belongs to the peptidase C19 family.

The enzyme catalyses Thiol-dependent hydrolysis of ester, thioester, amide, peptide and isopeptide bonds formed by the C-terminal Gly of ubiquitin (a 76-residue protein attached to proteins as an intracellular targeting signal).. May recognize and hydrolyze the peptide bond at the C-terminal Gly of ubiquitin. Involved in the processing of poly-ubiquitin precursors as well as that of ubiquitinated proteins. The sequence is that of Ubiquitin carboxyl-terminal hydrolase 43 (Usp43) from Mus musculus (Mouse).